The chain runs to 541 residues: Arginine--tRNA ligase (541 aa).

Positions 119–129 (ANPTGPLHIGH) match the 'HIGH' region motif.

It belongs to the class-I aminoacyl-tRNA synthetase family. Monomer.

It is found in the cytoplasm. It carries out the reaction tRNA(Arg) + L-arginine + ATP = L-arginyl-tRNA(Arg) + AMP + diphosphate. This Helicobacter acinonychis (strain Sheeba) protein is Arginine--tRNA ligase.